Consider the following 216-residue polypeptide: Pyridoxine/pyridoxamine 5'-phosphate oxidase (216 aa).

FMN contacts are provided by residues 65-70 (RMVLLK), 80-81 (YT), R86, K87, and Q109. A substrate-binding site is contributed by K70. Substrate is bound by residues Y127, R131, and S135. Residues 144-145 (QS) and W189 each bind FMN. Residue 195–197 (RLH) coordinates substrate. R199 lines the FMN pocket.

Belongs to the pyridoxamine 5'-phosphate oxidase family. Homodimer. FMN is required as a cofactor.

It carries out the reaction pyridoxamine 5'-phosphate + O2 + H2O = pyridoxal 5'-phosphate + H2O2 + NH4(+). It catalyses the reaction pyridoxine 5'-phosphate + O2 = pyridoxal 5'-phosphate + H2O2. It functions in the pathway cofactor metabolism; pyridoxal 5'-phosphate salvage; pyridoxal 5'-phosphate from pyridoxamine 5'-phosphate: step 1/1. Its pathway is cofactor metabolism; pyridoxal 5'-phosphate salvage; pyridoxal 5'-phosphate from pyridoxine 5'-phosphate: step 1/1. Functionally, catalyzes the oxidation of either pyridoxine 5'-phosphate (PNP) or pyridoxamine 5'-phosphate (PMP) into pyridoxal 5'-phosphate (PLP). The protein is Pyridoxine/pyridoxamine 5'-phosphate oxidase of Sphingopyxis alaskensis (strain DSM 13593 / LMG 18877 / RB2256) (Sphingomonas alaskensis).